Here is a 59-residue protein sequence, read N- to C-terminus: UPF0434 protein plu1633 (59 aa).

It belongs to the UPF0434 family.

The protein is UPF0434 protein plu1633 of Photorhabdus laumondii subsp. laumondii (strain DSM 15139 / CIP 105565 / TT01) (Photorhabdus luminescens subsp. laumondii).